The chain runs to 303 residues: UDP-3-O-acyl-N-acetylglucosamine deacetylase (303 aa).

His-78, His-237, and Asp-241 together coordinate Zn(2+). The active-site Proton donor is His-264.

The protein belongs to the LpxC family. It depends on Zn(2+) as a cofactor.

It catalyses the reaction a UDP-3-O-[(3R)-3-hydroxyacyl]-N-acetyl-alpha-D-glucosamine + H2O = a UDP-3-O-[(3R)-3-hydroxyacyl]-alpha-D-glucosamine + acetate. Its pathway is glycolipid biosynthesis; lipid IV(A) biosynthesis; lipid IV(A) from (3R)-3-hydroxytetradecanoyl-[acyl-carrier-protein] and UDP-N-acetyl-alpha-D-glucosamine: step 2/6. Functionally, catalyzes the hydrolysis of UDP-3-O-myristoyl-N-acetylglucosamine to form UDP-3-O-myristoylglucosamine and acetate, the committed step in lipid A biosynthesis. This Saccharophagus degradans (strain 2-40 / ATCC 43961 / DSM 17024) protein is UDP-3-O-acyl-N-acetylglucosamine deacetylase.